We begin with the raw amino-acid sequence, 393 residues long: Protein TsgA (393 aa).

Residues 1–10 (MTNSNRIKLT) lie on the Cytoplasmic side of the membrane. The chain crosses the membrane as a helical span at residues 11 to 31 (WISFLSYALTGALVIVTGMVM). Residues 32 to 50 (GNIADYFHLPVSSMSNTFT) lie on the Periplasmic side of the membrane. Residues 51–71 (FLNAGILISIFLNAWLMEIVP) form a helical membrane-spanning segment. Over 72–77 (LKTQLR) the chain is Cytoplasmic. Residues 78 to 98 (FGFILMVLAVAGLMFSHSLAL) traverse the membrane as a helical segment. Topologically, residues 99-100 (FS) are periplasmic. Residues 101-121 (AAMFVLGLVSGITMSIGTFLI) traverse the membrane as a helical segment. The Cytoplasmic portion of the chain corresponds to 122–133 (TQLYEGRQRGSR). A helical transmembrane segment spans residues 134 to 154 (LLFTDSFFSMAGMIFPMVAAF). Residues 155–161 (LLARSIE) lie on the Periplasmic side of the membrane. Residues 162–182 (WYWVYACIGLVYLAIFILTFG) traverse the membrane as a helical segment. Topologically, residues 183–205 (CEFPALGKHAQHSQAPVVKEKWG) are cytoplasmic. The helical transmembrane segment at 206-226 (IGVLFLAVAALCYILGQLGFI) threads the bilayer. Residues 227 to 244 (SWVPEYAKGLGMSLNDAG) are Periplasmic-facing. The chain crosses the membrane as a helical span at residues 245–265 (ALVSDFWMSYMFGMWAFSFIL). At 266–272 (RFFDLQR) the chain is on the cytoplasmic side. A helical membrane pass occupies residues 273 to 293 (ILTVLAGMAAVLMYLFITGTQ). At 294-297 (AHMP) the chain is on the periplasmic side. Residues 298–318 (WFILTLGFFSSAIYTSIITLG) form a helical membrane-spanning segment. Topologically, residues 319–331 (SQQTKVASPKLVN) are cytoplasmic. The helical transmembrane segment at 332–352 (FILTCGTIGTMLTFVVTGPIV) threads the bilayer. At 353-360 (AHSGPQAA) the chain is on the periplasmic side. Residues 361–381 (LLTANGLYAVVFVMCFALGFV) traverse the membrane as a helical segment. At 382-393 (SRHRQHSSPAAH) the chain is on the cytoplasmic side.

The protein belongs to the major facilitator superfamily. TsgA family.

It localises to the cell inner membrane. The protein is Protein TsgA of Salmonella paratyphi A (strain ATCC 9150 / SARB42).